We begin with the raw amino-acid sequence, 456 residues long: Phosphomethylpyrimidine synthase (456 aa).

Residues Asn80, Met109, Tyr139, His175, 195-197 (SRG), 236-239 (DSLR), and Glu275 each bind substrate. Zn(2+) is bound at residue His279. Substrate is bound at residue Tyr302. Residue His343 coordinates Zn(2+). Cys423, Cys426, and Cys431 together coordinate [4Fe-4S] cluster.

Belongs to the ThiC family. [4Fe-4S] cluster serves as cofactor.

The enzyme catalyses 5-amino-1-(5-phospho-beta-D-ribosyl)imidazole + S-adenosyl-L-methionine = 4-amino-2-methyl-5-(phosphooxymethyl)pyrimidine + CO + 5'-deoxyadenosine + formate + L-methionine + 3 H(+). It participates in cofactor biosynthesis; thiamine diphosphate biosynthesis. Catalyzes the synthesis of the hydroxymethylpyrimidine phosphate (HMP-P) moiety of thiamine from aminoimidazole ribotide (AIR) in a radical S-adenosyl-L-methionine (SAM)-dependent reaction. This chain is Phosphomethylpyrimidine synthase, found in Synechococcus elongatus (strain ATCC 33912 / PCC 7942 / FACHB-805) (Anacystis nidulans R2).